A 325-amino-acid polypeptide reads, in one-letter code: uncharacterized protein (325 aa).

The tract at residues 296 to 325 (QRTLSSSMEEADRPRRMSVTQPHLPPVPSA) is disordered.

The protein belongs to the NDRG family.

This is an uncharacterized protein from Caenorhabditis elegans.